The chain runs to 214 residues: tRNA (guanine-N(7)-)-methyltransferase (214 aa).

E43, E68, D95, and D117 together coordinate S-adenosyl-L-methionine. D117 is a catalytic residue. Substrate-binding positions include K121, D153, and 190–193 (TEYE).

Belongs to the class I-like SAM-binding methyltransferase superfamily. TrmB family.

The enzyme catalyses guanosine(46) in tRNA + S-adenosyl-L-methionine = N(7)-methylguanosine(46) in tRNA + S-adenosyl-L-homocysteine. The protein operates within tRNA modification; N(7)-methylguanine-tRNA biosynthesis. Functionally, catalyzes the formation of N(7)-methylguanine at position 46 (m7G46) in tRNA. The protein is tRNA (guanine-N(7)-)-methyltransferase of Staphylococcus aureus (strain JH1).